The primary structure comprises 283 residues: Cyclin-C (283 aa).

Residues 20-151 (DLLKERQKDL…LLELMDCCLI (132 aa)) form the Cyclin N-terminal domain. Residues 252–283 (TILSKMPKPKPPPNSEGEQGPNGSQNSSYSQS) are disordered. Residues 272–283 (PNGSQNSSYSQS) are compositionally biased toward polar residues. The residue at position 275 (Ser-275) is a Phosphoserine.

It belongs to the cyclin family. Cyclin C subfamily. As to quaternary structure, component of the Mediator complex, which is composed of MED1, MED4, MED6, MED7, MED8, MED9, MED10, MED11, MED12, MED13, MED13L, MED14, MED15, MED16, MED17, MED18, MED19, MED20, MED21, MED22, MED23, MED24, MED25, MED26, MED27, MED29, MED30, MED31, CCNC, CDK8 and CDC2L6/CDK11. The MED12, MED13, CCNC and CDK8 subunits form a distinct module termed the CDK8 module. Mediator containing the CDK8 module is less active than Mediator lacking this module in supporting transcriptional activation. Individual preparations of the Mediator complex lacking one or more distinct subunits have been variously termed ARC, CRSP, DRIP, PC2, SMCC and TRAP. The cylin/CDK pair formed by CCNC/CDK8 also associates with the large subunit of RNA polymerase II.

It localises to the nucleus. In terms of biological role, component of the Mediator complex, a coactivator involved in regulated gene transcription of nearly all RNA polymerase II-dependent genes. Mediator functions as a bridge to convey information from gene-specific regulatory proteins to the basal RNA polymerase II transcription machinery. Mediator is recruited to promoters by direct interactions with regulatory proteins and serves as a scaffold for the assembly of a functional preinitiation complex with RNA polymerase II and the general transcription factors. Binds to and activates cyclin-dependent kinase CDK8 that phosphorylates the CTD (C-terminal domain) of the large subunit of RNA polymerase II (RNAp II), which may inhibit the formation of a transcription initiation complex. This chain is Cyclin-C (Ccnc), found in Mus musculus (Mouse).